The following is a 145-amino-acid chain: Large ribosomal subunit protein eL32 (145 aa).

The protein belongs to the eukaryotic ribosomal protein eL32 family.

This is Large ribosomal subunit protein eL32 (rpl32e) from Aeropyrum pernix (strain ATCC 700893 / DSM 11879 / JCM 9820 / NBRC 100138 / K1).